The sequence spans 471 residues: 5-hydroxytryptamine receptor 2A (471 aa).

At 1-80 the chain is on the extracellular side; that stretch reads MEILCEDNTS…LQEKNWSALL (80 aa). N-linked (GlcNAc...) asparagine glycosylation is found at asparagine 8, asparagine 38, asparagine 44, asparagine 51, and asparagine 54. A helical transmembrane segment spans residues 81–97; that stretch reads TAVVIILTIAGNILVIM. Residues 98–111 lie on the Cytoplasmic side of the membrane; the sequence is AVSLEKKLQNATNY. Residues 112–137 form a helical membrane-spanning segment; the sequence is FLMSLAIADMLLGFLVMPVSMLTILY. The Extracellular segment spans residues 138-146; sequence GYRWPLPSK. The chain crosses the membrane as a helical span at residues 147–171; that stretch reads LCAVWIYLDVLFSTASIMHLCAISL. Cysteine 148 and cysteine 227 are disulfide-bonded. Serotonin is bound at residue aspartate 155. The DRY motif; important for ligand-induced conformation changes signature appears at 172–174; the sequence is DRY. Residues 172 to 191 are Cytoplasmic-facing; the sequence is DRYVAIQNPIHHSRFNSRTK. Residues 192–215 traverse the membrane as a helical segment; sequence AFLKIIAVWTISVGVSMPIPVFGL. At 216–232 the chain is on the extracellular side; that stretch reads QDDSKVFKQGSCLLADD. Residues 233 to 258 traverse the membrane as a helical segment; that stretch reads NFVLIGSFVAFFIPLTIMVITYFLTI. The Cytoplasmic segment spans residues 259–322; it reads KSLQKEATLC…QSISNEQKAC (64 aa). Position 280 is a phosphoserine (serine 280). The chain crosses the membrane as a helical span at residues 323-348; sequence KVLGIVFFLFVVMWCPFFITNIMAVI. Asparagine 343 lines the serotonin pocket. Cysteine 349 and cysteine 353 are joined by a disulfide. Over 349-356 the chain is Extracellular; that stretch reads CKESCNEH. A helical transmembrane segment spans residues 357–382; that stretch reads VIGALLNVFVWIGYLSSAVNPLVYTL. The short motif at 376 to 380 is the NPxxY motif; important for ligand-induced conformation changes and signaling element; sequence NPLVY. At 383–471 the chain is on the cytoplasmic side; it reads FNKTYRSAFS…NTVNEKVSCV (89 aa). A PDZ-binding motif is present at residues 469–471; sequence SCV.

It belongs to the G-protein coupled receptor 1 family. In terms of assembly, interacts (via C-terminus) with MPDZ and PATJ. May interact (via C-terminus) with MPP3, PRDX6, DLG4, DLG1, CASK, APBA1 and MAGI2. Interacts with GRM2 and DRD2; this may affect signaling.

It localises to the cell membrane. The protein resides in the cell projection. It is found in the dendrite. Its subcellular location is the axon. The protein localises to the cytoplasmic vesicle. It localises to the membrane. The protein resides in the caveola. It is found in the presynapse. Its activity is regulated as follows. G-protein coupled receptor activity is regulated by lipids: oleamide increases HTR2A-mediated activity. In terms of biological role, G-protein coupled receptor for 5-hydroxytryptamine (serotonin). Also functions as a receptor for various drugs and psychoactive substances, including mescaline, psilocybin, 1-(2,5-dimethoxy-4-iodophenyl)-2-aminopropane (DOI) and lysergic acid diethylamide (LSD). Ligand binding causes a conformation change that triggers signaling via guanine nucleotide-binding proteins (G proteins) and modulates the activity of downstream effectors. HTR2A is coupled to G(q)/G(11) G alpha proteins and activates phospholipase C-beta, releasing diacylglycerol (DAG) and inositol 1,4,5-trisphosphate (IP3) second messengers that modulate the activity of phosphatidylinositol 3-kinase and promote the release of Ca(2+) ions from intracellular stores, respectively. Beta-arrestin family members inhibit signaling via G proteins and mediate activation of alternative signaling pathways. Affects neural activity, perception, cognition and mood. Plays a role in the regulation of behavior, including responses to anxiogenic situations and psychoactive substances. Plays a role in intestinal smooth muscle contraction, and may play a role in arterial vasoconstriction. This chain is 5-hydroxytryptamine receptor 2A (HTR2A), found in Cricetulus griseus (Chinese hamster).